Here is a 144-residue protein sequence, read N- to C-terminus: Large ribosomal subunit protein uL15 (144 aa).

Positions 1–10 are enriched in polar residues; it reads MYLNTISPSR. The disordered stretch occupies residues 1 to 51; it reads MYLNTISPSRGSKHLSKRVGRGIGSGLGKTGGRGHKGQKSRSGGKVRLGFE. Basic residues predominate over residues 11–20; the sequence is GSKHLSKRVG. Over residues 21 to 31 the composition is skewed to gly residues; sequence RGIGSGLGKTG. Positions 32–44 are enriched in basic residues; it reads GRGHKGQKSRSGG.

Belongs to the universal ribosomal protein uL15 family. As to quaternary structure, part of the 50S ribosomal subunit.

Its function is as follows. Binds to the 23S rRNA. The polypeptide is Large ribosomal subunit protein uL15 (Blochmanniella pennsylvanica (strain BPEN)).